The sequence spans 132 residues: Auxin-responsive protein SAUR72 (132 aa).

The interval 22-54 (SDSQRPSRRSESFLRSSVTRRSKKQTSSVPEGH) is disordered. Residues 23 to 33 (DSQRPSRRSES) are compositionally biased toward basic and acidic residues.

This sequence belongs to the ARG7 family. In terms of assembly, interacts with and inhibits PP2C-D subfamily of type 2C phosphatases such as PP2C67/PP2C-D1. Highly expressed in the steles of roots and hypocotyls.

It is found in the cytoplasm. In terms of biological role, provide a mechanistic link between auxin and plasma membrane H(+)-ATPases (PM H(+)-ATPases, e.g. AHA1 and AHA2), and triggers PM H(+)-ATPases activity by promoting phosphorylation of their C-terminal autoinhibitory domain as a result of PP2C-D subfamily of type 2C phosphatases inhibition, thus leading to the acidification of the apoplast and the facilitation of solutes and water uptake to drive cell expansion. Plays a role in the regulation of cell expansion, root meristem patterning and auxin transport. The polypeptide is Auxin-responsive protein SAUR72 (Arabidopsis thaliana (Mouse-ear cress)).